Here is a 212-residue protein sequence, read N- to C-terminus: Peroxisomal membrane protein 4 (212 aa).

A run of 2 helical transmembrane segments spans residues 97–117 (GETHQMHSFLAAFIGGLLLFG) and 153–173 (WDPFPLHTAVIWGLVLWLFEY). Asn206 is a glycosylation site (N-linked (GlcNAc...) asparagine).

Belongs to the peroxisomal membrane protein PXMP2/4 family. In terms of assembly, interacts with PEX19.

It localises to the peroxisome membrane. This chain is Peroxisomal membrane protein 4 (Pxmp4), found in Mus musculus (Mouse).